The primary structure comprises 52 residues: MPQIFPMNWFLMSLMIMMILIFMTINFYFFSMKMPNKNMFNLNKKTKYNFKW.

A helical membrane pass occupies residues 10–30; that stretch reads FLMSLMIMMILIFMTINFYFF.

The protein belongs to the ATPase protein 8 family. As to quaternary structure, F-type ATPases have 2 components, CF(1) - the catalytic core - and CF(0) - the membrane proton channel.

The protein localises to the mitochondrion membrane. In terms of biological role, mitochondrial membrane ATP synthase (F(1)F(0) ATP synthase or Complex V) produces ATP from ADP in the presence of a proton gradient across the membrane which is generated by electron transport complexes of the respiratory chain. F-type ATPases consist of two structural domains, F(1) - containing the extramembraneous catalytic core and F(0) - containing the membrane proton channel, linked together by a central stalk and a peripheral stalk. During catalysis, ATP synthesis in the catalytic domain of F(1) is coupled via a rotary mechanism of the central stalk subunits to proton translocation. Part of the complex F(0) domain. Minor subunit located with subunit a in the membrane. This is ATP synthase protein 8 (MT-ATP8) from Rhipicephalus sanguineus (Brown dog tick).